The sequence spans 125 residues: Fluoride-specific ion channel FluC (125 aa).

A run of 4 helical transmembrane segments spans residues 6–26, 34–54, 68–88, and 98–118; these read GFIALAGAAGTLARYWLSGLV, FPWGTAVVNILGCFLFGLVWE, AVLLTGFMGAFTTFSTFIFES, and LALLANLGFQTILGFAALFAG. Na(+) is bound by residues G76 and T79.

It belongs to the fluoride channel Fluc/FEX (TC 1.A.43) family.

It is found in the cell inner membrane. The enzyme catalyses fluoride(in) = fluoride(out). With respect to regulation, na(+) is not transported, but it plays an essential structural role and its presence is essential for fluoride channel function. Fluoride-specific ion channel. Important for reducing fluoride concentration in the cell, thus reducing its toxicity. In Solidesulfovibrio magneticus (strain ATCC 700980 / DSM 13731 / RS-1) (Desulfovibrio magneticus), this protein is Fluoride-specific ion channel FluC.